The chain runs to 577 residues: (E)-beta-farnesene synthase (577 aa).

Asp327, Asp331, Asp474, Ser478, and Glu482 together coordinate Mg(2+). Residues 327-331 carry the DDXXD motif motif; the sequence is DDTFD.

The protein belongs to the terpene synthase family. It depends on Mg(2+) as a cofactor. Requires Co(2+) as cofactor. Mn(2+) is required as a cofactor. In terms of tissue distribution, expressed in flowers.

The protein resides in the cytoplasm. The catalysed reaction is (2E,6E)-farnesyl diphosphate = (E)-beta-farnesene + diphosphate. The protein operates within secondary metabolite biosynthesis; terpenoid biosynthesis. Strongly inhibited by manganese at concentration higher than 20 uM. Sesquiterpene cyclase catalyzing the production of beta-farnesene from farnesyl diphosphate. Unable to use geranyl diphosphate as substrate. The protein is (E)-beta-farnesene synthase (CASC125) of Artemisia annua (Sweet wormwood).